The following is a 160-amino-acid chain: SsrA-binding protein (160 aa).

It belongs to the SmpB family.

Its subcellular location is the cytoplasm. In terms of biological role, required for rescue of stalled ribosomes mediated by trans-translation. Binds to transfer-messenger RNA (tmRNA), required for stable association of tmRNA with ribosomes. tmRNA and SmpB together mimic tRNA shape, replacing the anticodon stem-loop with SmpB. tmRNA is encoded by the ssrA gene; the 2 termini fold to resemble tRNA(Ala) and it encodes a 'tag peptide', a short internal open reading frame. During trans-translation Ala-aminoacylated tmRNA acts like a tRNA, entering the A-site of stalled ribosomes, displacing the stalled mRNA. The ribosome then switches to translate the ORF on the tmRNA; the nascent peptide is terminated with the 'tag peptide' encoded by the tmRNA and targeted for degradation. The ribosome is freed to recommence translation, which seems to be the essential function of trans-translation. This chain is SsrA-binding protein, found in Enterobacter sp. (strain 638).